A 156-amino-acid chain; its full sequence is SsrA-binding protein (156 aa).

It belongs to the SmpB family.

It localises to the cytoplasm. Its function is as follows. Required for rescue of stalled ribosomes mediated by trans-translation. Binds to transfer-messenger RNA (tmRNA), required for stable association of tmRNA with ribosomes. tmRNA and SmpB together mimic tRNA shape, replacing the anticodon stem-loop with SmpB. tmRNA is encoded by the ssrA gene; the 2 termini fold to resemble tRNA(Ala) and it encodes a 'tag peptide', a short internal open reading frame. During trans-translation Ala-aminoacylated tmRNA acts like a tRNA, entering the A-site of stalled ribosomes, displacing the stalled mRNA. The ribosome then switches to translate the ORF on the tmRNA; the nascent peptide is terminated with the 'tag peptide' encoded by the tmRNA and targeted for degradation. The ribosome is freed to recommence translation, which seems to be the essential function of trans-translation. This Trichodesmium erythraeum (strain IMS101) protein is SsrA-binding protein.